The primary structure comprises 230 residues: 2,3-bisphosphoglycerate-dependent phosphoglycerate mutase (230 aa).

Residues 8-15, 21-22, Arg-60, 87-90, Lys-98, 114-115, and 183-184 contribute to the substrate site; these read RHGESEWN, TG, ERHY, RR, and GN. The Tele-phosphohistidine intermediate role is filled by His-9. The active-site Proton donor/acceptor is Glu-87.

The protein belongs to the phosphoglycerate mutase family. BPG-dependent PGAM subfamily.

It catalyses the reaction (2R)-2-phosphoglycerate = (2R)-3-phosphoglycerate. It participates in carbohydrate degradation; glycolysis; pyruvate from D-glyceraldehyde 3-phosphate: step 3/5. In terms of biological role, catalyzes the interconversion of 2-phosphoglycerate and 3-phosphoglycerate. The protein is 2,3-bisphosphoglycerate-dependent phosphoglycerate mutase of Streptococcus sanguinis (strain SK36).